The primary structure comprises 451 residues: Tubulin alpha chain (451 aa).

A GTP-binding site is contributed by Q11. Residue K40 is modified to N6-acetyllysine. 7 residues coordinate GTP: E71, S140, G144, T145, T179, N206, and N228. E71 serves as a coordination point for Mg(2+). E254 is an active-site residue.

The protein belongs to the tubulin family. Dimer of alpha and beta chains. A typical microtubule is a hollow water-filled tube with an outer diameter of 25 nm and an inner diameter of 15 nM. Alpha-beta heterodimers associate head-to-tail to form protofilaments running lengthwise along the microtubule wall with the beta-tubulin subunit facing the microtubule plus end conferring a structural polarity. Microtubules usually have 13 protofilaments but different protofilament numbers can be found in some organisms and specialized cells. Mg(2+) is required as a cofactor. In terms of processing, undergoes a tyrosination/detyrosination cycle, the cyclic removal and re-addition of a C-terminal tyrosine residue by the enzymes tubulin tyrosine carboxypeptidase (TTCP) and tubulin tyrosine ligase (TTL), respectively. Acetylation of alpha chains at Lys-40 stabilizes microtubules and affects affinity and processivity of microtubule motors. This modification has a role in multiple cellular functions, ranging from cell motility, cell cycle progression or cell differentiation to intracellular trafficking and signaling. In terms of tissue distribution, actively expressed in the lens but does not seem to be lens-specific.

It localises to the cytoplasm. The protein resides in the cytoskeleton. The catalysed reaction is GTP + H2O = GDP + phosphate + H(+). Its function is as follows. Tubulin is the major constituent of microtubules, a cylinder consisting of laterally associated linear protofilaments composed of alpha- and beta-tubulin heterodimers. Microtubules grow by the addition of GTP-tubulin dimers to the microtubule end, where a stabilizing cap forms. Below the cap, tubulin dimers are in GDP-bound state, owing to GTPase activity of alpha-tubulin. This is Tubulin alpha chain from Enteroctopus dofleini (North Pacific giant octopus).